Reading from the N-terminus, the 360-residue chain is Phospho-N-acetylmuramoyl-pentapeptide-transferase (360 aa).

The next 10 helical transmembrane spans lie at 21 to 41 (YVTF…LWWG), 74 to 94 (MGGL…GDLG), 97 to 117 (YVWV…IDDY), 135 to 155 (LLQS…ADTA), 168 to 188 (VMPQ…VGSS), 199 to 219 (GLAI…AYLS), 236 to 256 (AGEL…FLWF), 263 to 283 (VFMG…IAVL), 288 to 308 (ILLV…ILQV), and 338 to 358 (VIVR…ATLK).

This sequence belongs to the glycosyltransferase 4 family. MraY subfamily. Mg(2+) is required as a cofactor.

It localises to the cell inner membrane. The enzyme catalyses UDP-N-acetyl-alpha-D-muramoyl-L-alanyl-gamma-D-glutamyl-meso-2,6-diaminopimeloyl-D-alanyl-D-alanine + di-trans,octa-cis-undecaprenyl phosphate = di-trans,octa-cis-undecaprenyl diphospho-N-acetyl-alpha-D-muramoyl-L-alanyl-D-glutamyl-meso-2,6-diaminopimeloyl-D-alanyl-D-alanine + UMP. It participates in cell wall biogenesis; peptidoglycan biosynthesis. In terms of biological role, catalyzes the initial step of the lipid cycle reactions in the biosynthesis of the cell wall peptidoglycan: transfers peptidoglycan precursor phospho-MurNAc-pentapeptide from UDP-MurNAc-pentapeptide onto the lipid carrier undecaprenyl phosphate, yielding undecaprenyl-pyrophosphoryl-MurNAc-pentapeptide, known as lipid I. In Shewanella piezotolerans (strain WP3 / JCM 13877), this protein is Phospho-N-acetylmuramoyl-pentapeptide-transferase.